The sequence spans 407 residues: Putative D-cysteine desulfhydrase 2, mitochondrial (407 aa).

Residues 1 to 34 constitute a mitochondrion transit peptide; sequence MRPSPALAGGGRTVANLLSATEWMLPSPATQVHT. Residues 39-72 are disordered; sequence PSHSPPSPPHHFAFSNLTTAPKRNGGKGEEEGRP. Residue Lys90 is modified to N6-(pyridoxal phosphate)lysine.

Belongs to the ACC deaminase/D-cysteine desulfhydrase family. Pyridoxal 5'-phosphate serves as cofactor.

It localises to the mitochondrion. The catalysed reaction is D-cysteine + H2O = hydrogen sulfide + pyruvate + NH4(+) + H(+). Its function is as follows. Catalyzes the production of hydrogen sulfide (H2S) from cysteine. The polypeptide is Putative D-cysteine desulfhydrase 2, mitochondrial (Oryza sativa subsp. japonica (Rice)).